The chain runs to 451 residues: MRECISIHIGQAGIQVGNACWELYCLEHGIQPDGQMPGDKTVGGGDDAFNTFFSETGAGKHVPRAVFVDLEPTVIDEVRTGDYRQLFHPEQLISGKEDAANNFARGHYTIGKEIVDLCLDRIRKLADNCTGLQGFLVFNAVGGGTGSGLGSLLLERLSVDYGKKSKLGFTVYPSPQVSTSVVEPYNSVLSTHSLLEHTDVAVLLDNEAIYDICRRSLDIERPTYTNLNRLVSQVISSLTASLRFDGALNVDVNEFQTNLVPYPRIHFMLSSYAPVISAEKAYHEQLSVAEITNSAFEPSSMMAKCDPRHGKYMACCLMYRGDVVPKDVNAAVATIKTKRTIQFVDWCPTGFKCGINYQPPSVVPGGDLAKVQRAVCMISNSTSVVEVFSRIDIKFDLMYSKRAFVHWYVGEGMEEGEFSEAREDLAALEKDYEEVGSEFDDGDEGDEGDEY.

Q11 is a binding site for GTP. K40 is modified (N6-acetyllysine). Positions 71, 144, 145, 179, 206, and 228 each coordinate GTP. E71 is a binding site for Mg(2+). E254 is a catalytic residue.

Belongs to the tubulin family. As to quaternary structure, dimer of alpha and beta chains. A typical microtubule is a hollow water-filled tube with an outer diameter of 25 nm and an inner diameter of 15 nM. Alpha-beta heterodimers associate head-to-tail to form protofilaments running lengthwise along the microtubule wall with the beta-tubulin subunit facing the microtubule plus end conferring a structural polarity. Microtubules usually have 13 protofilaments but different protofilament numbers can be found in some organisms and specialized cells. It depends on Mg(2+) as a cofactor. Undergoes a tyrosination/detyrosination cycle, the cyclic removal and re-addition of a C-terminal tyrosine residue by the enzymes tubulin tyrosine carboxypeptidase (TTCP) and tubulin tyrosine ligase (TTL), respectively. In terms of processing, acetylation of alpha chains at Lys-40 stabilizes microtubules and affects affinity and processivity of microtubule motors. This modification has a role in multiple cellular functions, ranging from cell motility, cell cycle progression or cell differentiation to intracellular trafficking and signaling.

The protein resides in the cytoplasm. The protein localises to the cytoskeleton. The catalysed reaction is GTP + H2O = GDP + phosphate + H(+). Functionally, tubulin is the major constituent of microtubules, a cylinder consisting of laterally associated linear protofilaments composed of alpha- and beta-tubulin heterodimers. Microtubules grow by the addition of GTP-tubulin dimers to the microtubule end, where a stabilizing cap forms. Below the cap, tubulin dimers are in GDP-bound state, owing to GTPase activity of alpha-tubulin. The polypeptide is Tubulin alpha-2 chain (TUBA) (Oryza sativa subsp. japonica (Rice)).